Here is a 347-residue protein sequence, read N- to C-terminus: NADH-ubiquinone oxidoreductase chain 2 (347 aa).

10 helical membrane passes run Leu4 to Met21, Trp26 to Met45, Tyr59 to Ile79, Ile96 to Pro116, Ile122 to Leu142, Ala148 to Gly168, Ala201 to Leu221, Thr242 to Pro262, Asp274 to Met294, and Leu326 to Leu346.

It belongs to the complex I subunit 2 family. As to quaternary structure, core subunit of respiratory chain NADH dehydrogenase (Complex I) which is composed of 45 different subunits. Interacts with TMEM242.

Its subcellular location is the mitochondrion inner membrane. It carries out the reaction a ubiquinone + NADH + 5 H(+)(in) = a ubiquinol + NAD(+) + 4 H(+)(out). Its function is as follows. Core subunit of the mitochondrial membrane respiratory chain NADH dehydrogenase (Complex I) which catalyzes electron transfer from NADH through the respiratory chain, using ubiquinone as an electron acceptor. Essential for the catalytic activity and assembly of complex I. This Syconycteris australis (Southern blossom bat) protein is NADH-ubiquinone oxidoreductase chain 2.